A 1474-amino-acid chain; its full sequence is SH3 and multiple ankyrin repeat domains protein 2 (1474 aa).

Polar residues predominate over residues Leu66–Ser76. The disordered stretch occupies residues Leu66–Pro125. The SH3 domain occupies Val148 to Cys207. Gln162 bears the Phosphoserine mark. A PDZ domain is found at Thr248 to Thr342. Residue Ser373 is modified to Phosphoserine. Positions Arg392 to Asn413 are disordered. A Phosphoserine modification is found at Ser457. Thr486 carries the post-translational modification Phosphothreonine. The disordered stretch occupies residues Leu504–Cys534. The span at Ile513–Pro529 shows a compositional bias: pro residues. Ser586 is subject to Phosphoserine. 3 disordered regions span residues Thr659–Lys920, Pro947–Ala995, and Pro1057–Asp1153. A compositionally biased stretch (low complexity) spans Ser666–Ser678. Basic and acidic residues predominate over residues Val711–Arg722. Ser724 is subject to Phosphoserine. A compositionally biased stretch (gly residues) spans Leu783–Gly795. Low complexity-rich tracts occupy residues Pro811–Pro823 and Arg833–Ser846. 2 stretches are compositionally biased toward basic and acidic residues: residues Ala847–Leu868 and Arg899–Lys920. Position 903 is a phosphothreonine (Thr903). Positions Ser1075 to Thr1085 are enriched in polar residues. Residues Val1119–Glu1130 are compositionally biased toward basic and acidic residues. Residues Thr1131–Ser1151 show a composition bias toward low complexity. An SH3-binding motif is present at residues Pro1169–Pro1175. 2 disordered regions span residues Glu1195–Ala1216 and Asn1260–Lys1401. A compositionally biased stretch (pro residues) spans Ile1202–Gly1212. Residues Ser1291 to Val1305 are compositionally biased toward low complexity. O-linked (GlcNAc) threonine glycosylation occurs at Thr1292. Positions Pro1307–Ser1317 are enriched in polar residues. A phosphoserine mark is found at Ser1334 and Ser1338. Low complexity-rich tracts occupy residues Ser1352–Ser1363 and Arg1385–Ser1399. The SAM domain occupies Trp1411 to Arg1474.

The protein belongs to the SHANK family. In terms of assembly, is part of a complex with DLG4/PSD-95 and DLGAP1/GKAP. Interacts with CTTN/cortactin SH3 domain, DLGAP1/GKAP and alpha-latrotoxin receptor 1. Interacts with DNM2, DBNL, GRID2, BAIAP2, SLC9A3, PLCB3 and CFTR. Interacts with ABI1 (via SH3 domain). Interacts (via proline-rich region) with PDE4D isoform 5 (via N-terminal region). Interacts with PDE4D isoform 33, isoform 4, isoform 7, isoform 8 and isoform 9 but not isoform 32 and isoform 6. Interacts weakly with PDE4D isoform 31. Interacts with ABI1. Expressed in epithelial cells (at protein level). All isoforms except isoform 7 are expressed predominantly in brain, with highest levels in olfactory bulb, cerebral cortex, cerebellum, central gray matter and hippocampus. Moderate levels of expression are seen in the caudate putamen, thalamic nuclei and brain stem. In cerebellum primarily expressed in Purkinje cells. Isoform 7 is not expressed in brain but expressed in liver, cholangiocytes and thymus. Isoform 7 is present in pancreas, colonic mucosa and thymocytes (at protein level).

It localises to the apical cell membrane. The protein localises to the cytoplasm. The protein resides in the synapse. It is found in the postsynaptic density. Its subcellular location is the cell projection. It localises to the growth cone. The protein localises to the dendritic spine. In terms of biological role, seems to be an adapter protein in the postsynaptic density (PSD) of excitatory synapses that interconnects receptors of the postsynaptic membrane including NMDA-type and metabotropic glutamate receptors, and the actin-based cytoskeleton. May play a role in the structural and functional organization of the dendritic spine and synaptic junction. The protein is SH3 and multiple ankyrin repeat domains protein 2 (Shank2) of Rattus norvegicus (Rat).